A 389-amino-acid polypeptide reads, in one-letter code: 23S rRNA (uracil(747)-C(5))-methyltransferase RlmC (389 aa).

4 residues coordinate [4Fe-4S] cluster: cysteine 12, cysteine 20, cysteine 23, and cysteine 99. Residues glutamine 224, phenylalanine 253, glutamate 274, and asparagine 321 each contribute to the S-adenosyl-L-methionine site. The active-site Nucleophile is the cysteine 348.

This sequence belongs to the class I-like SAM-binding methyltransferase superfamily. RNA M5U methyltransferase family. RlmC subfamily.

It catalyses the reaction uridine(747) in 23S rRNA + S-adenosyl-L-methionine = 5-methyluridine(747) in 23S rRNA + S-adenosyl-L-homocysteine + H(+). Its function is as follows. Catalyzes the formation of 5-methyl-uridine at position 747 (m5U747) in 23S rRNA. The chain is 23S rRNA (uracil(747)-C(5))-methyltransferase RlmC from Shewanella putrefaciens (strain CN-32 / ATCC BAA-453).